A 79-amino-acid chain; its full sequence is Conotoxin Vi6.4 (79 aa).

The first 22 residues, 1-22 (MKLTCVLIITVLFLTASQLITA), serve as a signal peptide directing secretion. The propeptide occupies 23–47 (DYSGDKRQYRAVRLRDEMRNFKGAR). 3 disulfide bridges follow: cysteine 49/cysteine 62, cysteine 56/cysteine 67, and cysteine 61/cysteine 77. 2 positions are modified to 4-hydroxyproline: proline 60 and proline 63.

The protein belongs to the conotoxin O1 superfamily. Expressed by the venom duct.

The protein resides in the secreted. Its function is as follows. Ion channel inhibitor that inhibits the increase in intracellular calcium upon depolarization in DRG neurons. In vivo, both intraperitoneal and intracranial injections into mice induce hyperactivity. This is Conotoxin Vi6.4 from Conus virgo (Virgin cone).